Consider the following 414-residue polypeptide: Esterase FrsA (414 aa).

It belongs to the FrsA family.

It catalyses the reaction a carboxylic ester + H2O = an alcohol + a carboxylate + H(+). In terms of biological role, catalyzes the hydrolysis of esters. The chain is Esterase FrsA from Salmonella dublin (strain CT_02021853).